The following is a 178-amino-acid chain: Endothelin-2 (178 aa).

The first 24 residues, 1–24, serve as a signal peptide directing secretion; sequence MVSVPTTWCSVALALLVALHEGKG. Residues 25-46 constitute a propeptide that is removed on maturation; it reads QAAATLEQPASSSHAQGTHLRL. 2 cysteine pairs are disulfide-bonded: cysteine 49-cysteine 63 and cysteine 51-cysteine 59. Residues 70–178 constitute a propeptide that is removed on maturation; that stretch reads VNTPEQTAPY…RSTHSRWRKR (109 aa). Residues 96 to 111 form an endothelin-like region; that stretch reads CQCSSARDPACATFCL. A disordered region spans residues 159–178; that stretch reads KRQQEAMREPRSTHSRWRKR. Basic and acidic residues predominate over residues 160 to 170; sequence RQQEAMREPRS.

The protein belongs to the endothelin/sarafotoxin family. In terms of tissue distribution, expressed in lung, but not in placental stem villi vessels or cultured placental villi smooth muscle cells.

The protein localises to the secreted. In terms of biological role, endothelins are endothelium-derived vasoconstrictor peptides. The protein is Endothelin-2 (EDN2) of Homo sapiens (Human).